The following is a 710-amino-acid chain: Protein phosphatase 1 regulatory subunit 37 (710 aa).

Over residues 1 to 12 (MEIPPQEAPPGP) the composition is skewed to pro residues. Positions 1–46 (MEIPPQEAPPGPGADADADAEAEEAPAEAGSSSGASPPTDGRLKAA) are disordered. Over residues 16–26 (ADADAEAEEAP) the composition is skewed to acidic residues. Low complexity predominate over residues 27 to 38 (AEAGSSSGASPP). A phosphoserine mark is found at Ser54 and Ser60. LRR repeat units lie at residues 224 to 244 (SLAVLHLENASLSGRPLMLLA), 252 to 273 (NLQELYLADNKLNGLQDSAQLG), 281 to 301 (SLQILDLRNNHVLDSGLAYIC), 310 to 330 (GLVTLVLWNNQLTHTGMAFLG), and 338 to 358 (SLETLNLGHNPIGNEGVRNLK). Residues 487–677 (PLEESGDLPA…APPGLEAKGS (191 aa)) form a disordered region. Residues 512-531 (SDSDSDSDREEQEEEEEDQS) are compositionally biased toward acidic residues. The span at 543 to 565 (SSSAPCPALLPSTDSLGPGDKSP) shows a compositional bias: low complexity. Ser581 is subject to Phosphoserine. Over residues 603-624 (PPVPPTSVSSPPPSPPSPPASP) the composition is skewed to pro residues. Residues 637–649 (SEAQPQTEPSQAG) show a composition bias toward polar residues. Positions 656–676 (LKPEFALALAPEAPPGLEAKG) are enriched in low complexity.

The protein belongs to the PPP1R37 family. Interacts with PPP1CA.

Its function is as follows. Inhibits phosphatase activity of protein phosphatase 1 (PP1) complexes. The protein is Protein phosphatase 1 regulatory subunit 37 (Ppp1r37) of Rattus norvegicus (Rat).